An 882-amino-acid chain; its full sequence is Alanine--tRNA ligase (882 aa).

His-574, His-578, Cys-682, and His-686 together coordinate Zn(2+). The segment at Gly-853–Pro-882 is disordered. Positions Gly-854–Leu-868 are enriched in gly residues.

The protein belongs to the class-II aminoacyl-tRNA synthetase family. Requires Zn(2+) as cofactor.

The protein resides in the cytoplasm. It carries out the reaction tRNA(Ala) + L-alanine + ATP = L-alanyl-tRNA(Ala) + AMP + diphosphate. Catalyzes the attachment of alanine to tRNA(Ala) in a two-step reaction: alanine is first activated by ATP to form Ala-AMP and then transferred to the acceptor end of tRNA(Ala). Also edits incorrectly charged Ser-tRNA(Ala) and Gly-tRNA(Ala) via its editing domain. The sequence is that of Alanine--tRNA ligase from Thermus thermophilus (strain ATCC 27634 / DSM 579 / HB8).